We begin with the raw amino-acid sequence, 561 residues long: Phosphatidylinositol 4-kinase gamma 1 (561 aa).

The 296-residue stretch at 121–416 (GAQPLLLPSG…SVFGKTSEDS (296 aa)) folds into the PI3K/PI4K catalytic domain. Residues 127–133 (LPSGMGG) form a G-loop region. Residues 128–134 (PSGMGGA), Lys149, and 233–236 (QRFV) contribute to the ATP site. Positions 266–274 (LNLDRHAGN) are catalytic loop. Residues 296-322 (PIDHGLCLPECLDDPYFEWLNWPQALV) form an activation loop region. Asp298 provides a ligand contact to ATP. Residues 456–520 (PPLVPRGPRA…PISPNHDESK (65 aa)) form a disordered region. Over residues 467 to 484 (TIPNDVTASMSSSQNQRI) the composition is skewed to polar residues.

This sequence belongs to the PI3/PI4-kinase family. Type II PI4K subfamily.

It carries out the reaction a 1,2-diacyl-sn-glycero-3-phospho-(1D-myo-inositol) + ATP = a 1,2-diacyl-sn-glycero-3-phospho-(1D-myo-inositol 4-phosphate) + ADP + H(+). Its function is as follows. The phosphorylation of phosphatidylinositol (PI) to PI4P is the first committed step in the generation of phosphatidylinositol 4,5-bisphosphate (PIP2), a precursor of the second messenger inositol 1,4,5-trisphosphate (InsP3). This Arabidopsis thaliana (Mouse-ear cress) protein is Phosphatidylinositol 4-kinase gamma 1 (PI4KG1).